Here is a 519-residue protein sequence, read N- to C-terminus: Probable cytochrome P450 513D1 (519 aa).

The chain crosses the membrane as a helical span at residues 1-21; it reads MGISSIIIILFIIVLLKKLIK. C464 contributes to the heme binding site.

The protein belongs to the cytochrome P450 family. The cofactor is heme.

It localises to the membrane. This Dictyostelium discoideum (Social amoeba) protein is Probable cytochrome P450 513D1 (cyp513D1).